Here is a 101-residue protein sequence, read N- to C-terminus: NADH-quinone oxidoreductase subunit K (101 aa).

Transmembrane regions (helical) follow at residues 4–24, 30–50, and 61–81; these read LTHFLVLAAILFAISVLGIFL, IILLMAIELMLLAVNFNFIAF, and IFVFFILTVAAAESAIGLAIL.

The protein belongs to the complex I subunit 4L family. In terms of assembly, NDH-1 is composed of 14 different subunits. Subunits NuoA, H, J, K, L, M, N constitute the membrane sector of the complex.

It localises to the cell inner membrane. It carries out the reaction a quinone + NADH + 5 H(+)(in) = a quinol + NAD(+) + 4 H(+)(out). Functionally, NDH-1 shuttles electrons from NADH, via FMN and iron-sulfur (Fe-S) centers, to quinones in the respiratory chain. The immediate electron acceptor for the enzyme in this species is believed to be ubiquinone. Couples the redox reaction to proton translocation (for every two electrons transferred, four hydrogen ions are translocated across the cytoplasmic membrane), and thus conserves the redox energy in a proton gradient. The protein is NADH-quinone oxidoreductase subunit K of Chromobacterium violaceum (strain ATCC 12472 / DSM 30191 / JCM 1249 / CCUG 213 / NBRC 12614 / NCIMB 9131 / NCTC 9757 / MK).